Reading from the N-terminus, the 171-residue chain is Phosphopantetheine adenylyltransferase (171 aa).

Residue threonine 9 coordinates substrate. ATP-binding positions include 9 to 10 (TF) and histidine 17. 3 residues coordinate substrate: lysine 41, leucine 73, and arginine 87. ATP is bound by residues 88–90 (GLR), glutamate 98, and 123–129 (YQFISGT).

This sequence belongs to the bacterial CoaD family. Homohexamer. The cofactor is Mg(2+).

Its subcellular location is the cytoplasm. It carries out the reaction (R)-4'-phosphopantetheine + ATP + H(+) = 3'-dephospho-CoA + diphosphate. The protein operates within cofactor biosynthesis; coenzyme A biosynthesis; CoA from (R)-pantothenate: step 4/5. In terms of biological role, reversibly transfers an adenylyl group from ATP to 4'-phosphopantetheine, yielding dephospho-CoA (dPCoA) and pyrophosphate. The chain is Phosphopantetheine adenylyltransferase from Paraburkholderia xenovorans (strain LB400).